Reading from the N-terminus, the 105-residue chain is Insulin (105 aa).

The N-terminal stretch at 1–22 is a signal peptide; it reads MAFWLQAASLLVLLALSPGVDA. Cystine bridges form between Cys29/Cys91, Cys41/Cys104, and Cys90/Cys95. A propeptide spans 53-82 (c peptide); it reads DVDPLIGFLSPKSAKENEEYPFKDQTEMMV.

Belongs to the insulin family. Heterodimer of a B chain and an A chain linked by two disulfide bonds.

The protein resides in the secreted. Its function is as follows. Insulin decreases blood glucose concentration. It increases cell permeability to monosaccharides, amino acids and fatty acids. It accelerates glycolysis, the pentose phosphate cycle, and glycogen synthesis in liver. The protein is Insulin (ins) of Oncorhynchus keta (Chum salmon).